A 938-amino-acid chain; its full sequence is Isoleucine--tRNA ligase (938 aa).

The 'HIGH' region motif lies at 61–71 (PYANGDIHLGT). Glu559 is a binding site for L-isoleucyl-5'-AMP. The short motif at 601 to 605 (KMSKS) is the 'KMSKS' region element. Lys604 is a binding site for ATP. Cys904, Cys907, Cys923, and Cys926 together coordinate Zn(2+).

It belongs to the class-I aminoacyl-tRNA synthetase family. IleS type 1 subfamily. In terms of assembly, monomer. Zn(2+) is required as a cofactor.

The protein resides in the cytoplasm. The catalysed reaction is tRNA(Ile) + L-isoleucine + ATP = L-isoleucyl-tRNA(Ile) + AMP + diphosphate. Functionally, catalyzes the attachment of isoleucine to tRNA(Ile). As IleRS can inadvertently accommodate and process structurally similar amino acids such as valine, to avoid such errors it has two additional distinct tRNA(Ile)-dependent editing activities. One activity is designated as 'pretransfer' editing and involves the hydrolysis of activated Val-AMP. The other activity is designated 'posttransfer' editing and involves deacylation of mischarged Val-tRNA(Ile). This chain is Isoleucine--tRNA ligase, found in Symbiobacterium thermophilum (strain DSM 24528 / JCM 14929 / IAM 14863 / T).